A 779-amino-acid polypeptide reads, in one-letter code: ATP-dependent RNA helicase SUPV3L1, mitochondrial (779 aa).

A mitochondrion-targeting transit peptide spans Met1–Ser40. An N6-acetyllysine modification is found at Lys99. In terms of domain architecture, Helicase ATP-binding spans Glu194–Tyr334. Gly207–Thr214 serves as a coordination point for ATP. Residues Val353–Ala521 enclose the Helicase C-terminal domain. The tract at residues Pro650–Asp779 is interaction with LAMTOR5, important for protein stability. Over residues Ser693–Ser703 the composition is skewed to polar residues. Disordered regions lie at residues Ser693–Pro732 and Glu754–Asp779. Ser725 carries the phosphoserine modification. The segment covering Glu761–Asp779 has biased composition (basic and acidic residues).

This sequence belongs to the helicase family. As to quaternary structure, homodimer; in free form. Component of the mitochondrial degradosome (mtEXO) complex which is a heteropentamer containing 2 copies of SUPV3L1 and 3 copies of PNPT1. As part of mitochondrial degradosome complex, interacts with GRSF1 in a RNA-dependent manner; the interaction enhances the activity of the complex. Interacts with LAMTOR5/HBXIP, WRN and BLM. Mg(2+) is required as a cofactor. Requires Mn(2+) as cofactor.

The protein resides in the nucleus. It is found in the mitochondrion matrix. Its subcellular location is the mitochondrion nucleoid. It carries out the reaction ATP + H2O = ADP + phosphate + H(+). With respect to regulation, helicase activity toward DNA substrate is inhibited by micromolar concentrations of 5,6-dichloro-1-(beta-D-ribofuranosyl)benzotriazole (DRBT) and 4,5,6,7-tetrabromobenzotriazole (TBBT). Helicase activity toward RNA substrate is inhibited by elevated concentrations of TBBT. Inhibited by some ring-expanded nucleoside analogs. Functionally, major helicase player in mitochondrial RNA metabolism. Component of the mitochondrial degradosome (mtEXO) complex, that degrades 3' overhang double-stranded RNA with a 3'-to-5' directionality in an ATP-dependent manner. Involved in the degradation of non-coding mitochondrial transcripts (MT-ncRNA) and tRNA-like molecules. ATPase and ATP-dependent multisubstrate helicase, able to unwind double-stranded (ds) DNA and RNA, and RNA/DNA heteroduplexes in the 5'-to-3' direction. Plays a role in the RNA surveillance system in mitochondria; regulates the stability of mature mRNAs, the removal of aberrantly formed mRNAs and the rapid degradation of non coding processing intermediates. Also implicated in recombination and chromatin maintenance pathways. May protect cells from apoptosis. Associates with mitochondrial DNA. The chain is ATP-dependent RNA helicase SUPV3L1, mitochondrial (Supv3l1) from Mus musculus (Mouse).